A 70-amino-acid chain; its full sequence is Putative RNA-binding protein YbcJ (70 aa).

The 57-residue stretch at V12–V68 folds into the S4 RNA-binding domain.

In pull-down experiments interacts with CedA.

Its structure and the presence of conserved basic residues indicates that it probably binds RNA. This is Putative RNA-binding protein YbcJ (ybcJ) from Escherichia coli (strain K12).